The following is a 365-amino-acid chain: Spermidine/putrescine import ATP-binding protein PotA (365 aa).

The ABC transporter domain occupies 7–237 (LTLADITKRF…PNNLFVASFI (231 aa)). 39–46 (GPSGCGKT) is a binding site for ATP.

This sequence belongs to the ABC transporter superfamily. Spermidine/putrescine importer (TC 3.A.1.11.1) family. The complex is composed of two ATP-binding proteins (PotA), two transmembrane proteins (PotB and PotC) and a solute-binding protein (PotD).

The protein resides in the cell inner membrane. It carries out the reaction ATP + H2O + polyamine-[polyamine-binding protein]Side 1 = ADP + phosphate + polyamineSide 2 + [polyamine-binding protein]Side 1.. Its function is as follows. Part of the ABC transporter complex PotABCD involved in spermidine/putrescine import. Responsible for energy coupling to the transport system. This chain is Spermidine/putrescine import ATP-binding protein PotA, found in Hahella chejuensis (strain KCTC 2396).